The chain runs to 512 residues: Alpha-1B-glycoprotein (512 aa).

Positions 1-18 (MSLLATVLLLWGFTLGPG) are cleaved as a signal peptide. Ig-like V-type domains are found at residues 22 to 126 (MLDS…VTGK), 127 to 219 (EPLP…MYAS), 220 to 312 (QAPP…PVEL), 313 to 415 (MWSD…LRVN), and 416 to 512 (GPPP…IVEG). N-linked (GlcNAc...) asparagine glycosylation is found at Asn-44, Asn-89, and Asn-192. Cystine bridges form between Cys-49–Cys-96, Cys-153–Cys-195, Cys-245–Cys-292, Cys-343–Cys-392, and Cys-441–Cys-488. N-linked (GlcNAc...) asparagine glycans are attached at residues Asn-369, Asn-381, Asn-389, and Asn-485.

Interacts with CRISP3. Expressed in the liver hepatocytes of male and female GH transgenic mice and in the liver of female, but not of male, non-transgenic mice.

The protein resides in the secreted. The chain is Alpha-1B-glycoprotein (A1bg) from Mus musculus (Mouse).